We begin with the raw amino-acid sequence, 217 residues long: Peptide methionine sulfoxide reductase MsrA (217 aa).

Cys-56 is a catalytic residue.

The protein belongs to the MsrA Met sulfoxide reductase family.

The catalysed reaction is L-methionyl-[protein] + [thioredoxin]-disulfide + H2O = L-methionyl-(S)-S-oxide-[protein] + [thioredoxin]-dithiol. The enzyme catalyses [thioredoxin]-disulfide + L-methionine + H2O = L-methionine (S)-S-oxide + [thioredoxin]-dithiol. Its function is as follows. Has an important function as a repair enzyme for proteins that have been inactivated by oxidation. Catalyzes the reversible oxidation-reduction of methionine sulfoxide in proteins to methionine. In Corynebacterium glutamicum (strain ATCC 13032 / DSM 20300 / JCM 1318 / BCRC 11384 / CCUG 27702 / LMG 3730 / NBRC 12168 / NCIMB 10025 / NRRL B-2784 / 534), this protein is Peptide methionine sulfoxide reductase MsrA.